An 813-amino-acid chain; its full sequence is Probable E3 ubiquitin-protein ligase hulA (813 aa).

A C2 domain is found at Met1–Arg109. 2 disordered regions span residues Asn131–Arg235 and Arg251–Asp351. Residues Val148 to Pro167 are compositionally biased toward polar residues. Low complexity predominate over residues Arg188–Ser215. One can recognise a WW 1 domain in the interval Gly227–Ser260. A compositionally biased stretch (polar residues) spans Arg251–Glu264. Residues His265–Thr292 show a composition bias toward basic and acidic residues. The span at Gly293–His307 shows a compositional bias: polar residues. Positions Ala322–Gly331 are enriched in low complexity. WW domains follow at residues Gly331 to Arg364 and Gly391 to Leu424. The 334-residue stretch at Ser480–Glu813 folds into the HECT domain. The active-site Glycyl thioester intermediate is the Cys781.

Belongs to the RSP5/NEDD4 family. As to quaternary structure, interacts with creD.

The protein localises to the cytoplasm. It carries out the reaction S-ubiquitinyl-[E2 ubiquitin-conjugating enzyme]-L-cysteine + [acceptor protein]-L-lysine = [E2 ubiquitin-conjugating enzyme]-L-cysteine + N(6)-ubiquitinyl-[acceptor protein]-L-lysine.. It functions in the pathway protein modification; protein ubiquitination. E3 ubiquitin-protein ligase which accepts ubiquitin from an E2 ubiquitin-conjugating enzyme in the form of a thioester and then directly transfers the ubiquitin to targeted substrates. Probably involved in the regulatory network controlling carbon source utilization. The protein is Probable E3 ubiquitin-protein ligase hulA (hulA) of Aspergillus fumigatus (strain CBS 144.89 / FGSC A1163 / CEA10) (Neosartorya fumigata).